The chain runs to 49 residues: Large ribosomal subunit protein eL40 (49 aa).

Belongs to the eukaryotic ribosomal protein eL40 family.

In Methanopyrus kandleri (strain AV19 / DSM 6324 / JCM 9639 / NBRC 100938), this protein is Large ribosomal subunit protein eL40.